A 310-amino-acid chain; its full sequence is Ribosomal RNA small subunit methyltransferase H (310 aa).

S-adenosyl-L-methionine-binding positions include Ala33–His35, Asp53, Phe79, Asp100, and Gln107.

It belongs to the methyltransferase superfamily. RsmH family.

The protein localises to the cytoplasm. The enzyme catalyses cytidine(1402) in 16S rRNA + S-adenosyl-L-methionine = N(4)-methylcytidine(1402) in 16S rRNA + S-adenosyl-L-homocysteine + H(+). Specifically methylates the N4 position of cytidine in position 1402 (C1402) of 16S rRNA. This chain is Ribosomal RNA small subunit methyltransferase H, found in Clostridium botulinum (strain Eklund 17B / Type B).